Reading from the N-terminus, the 503-residue chain is Putative aldehyde dehydrogenase-like protein C9E9.09c (503 aa).

Glycine 247 to glycine 252 is an NAD(+) binding site. Serine 248 is subject to Phosphoserine. Glutamate 270 (proton acceptor) is an active-site residue. The active-site Nucleophile is cysteine 304. Serine 501 carries the post-translational modification Phosphoserine.

Belongs to the aldehyde dehydrogenase family.

The chain is Putative aldehyde dehydrogenase-like protein C9E9.09c from Schizosaccharomyces pombe (strain 972 / ATCC 24843) (Fission yeast).